A 688-amino-acid polypeptide reads, in one-letter code: Glycine--tRNA ligase beta subunit (688 aa).

Belongs to the class-II aminoacyl-tRNA synthetase family. Tetramer of two alpha and two beta subunits.

Its subcellular location is the cytoplasm. The catalysed reaction is tRNA(Gly) + glycine + ATP = glycyl-tRNA(Gly) + AMP + diphosphate. This Histophilus somni (strain 2336) (Haemophilus somnus) protein is Glycine--tRNA ligase beta subunit.